The primary structure comprises 958 residues: Valine--tRNA ligase (958 aa).

A 'HIGH' region motif is present at residues 45 to 55; the sequence is PNVTGSLHMGH. The short motif at 571–575 is the 'KMSKS' region element; it reads KMSKS. Residue K574 coordinates ATP. Residues 892–958 are a coiled coil; sequence AAERTRLDKE…EALERLKQAS (67 aa).

Belongs to the class-I aminoacyl-tRNA synthetase family. ValS type 1 subfamily. In terms of assembly, monomer.

Its subcellular location is the cytoplasm. The enzyme catalyses tRNA(Val) + L-valine + ATP = L-valyl-tRNA(Val) + AMP + diphosphate. In terms of biological role, catalyzes the attachment of valine to tRNA(Val). As ValRS can inadvertently accommodate and process structurally similar amino acids such as threonine, to avoid such errors, it has a 'posttransfer' editing activity that hydrolyzes mischarged Thr-tRNA(Val) in a tRNA-dependent manner. The sequence is that of Valine--tRNA ligase from Bradyrhizobium diazoefficiens (strain JCM 10833 / BCRC 13528 / IAM 13628 / NBRC 14792 / USDA 110).